The following is a 168-amino-acid chain: MPRSQKNDNFIDKTFTIVADILLRIIPTTQREKEAFTYYRDGMSAQSEGEYAEALQNYYEAMRLEIDPYDRSYILYNIGLIHTSNGEHAKALEYYFQALERNPSLPQAFNNMAVICHYRGEQAIQQGDSETSEAWFNQAADYWKQAIALAPSNYIEAQNWLKITDRLK.

TPR repeat units follow at residues 35–68 (AFTY…EIDP), 72–105 (SYIL…NPSL), and 120–153 (GEQA…APSN).

It belongs to the Ycf3 family.

It is found in the plastid. The protein resides in the chloroplast thylakoid membrane. Its function is as follows. Essential for the assembly of the photosystem I (PSI) complex. May act as a chaperone-like factor to guide the assembly of the PSI subunits. This Physcomitrium patens (Spreading-leaved earth moss) protein is Photosystem I assembly protein Ycf3.